Consider the following 79-residue polypeptide: MVGVNSLRSALYLIVLILFVQLTYFSDARVMDVDLSRAFLPLTGIGCGESCVWIPCVSAAIGCSCSNKICYRNGIIPKK.

Positions M1–T43 are excised as a propeptide. A cross-link (cyclopeptide (Gly-Asn)) is located at residues G44–N73. Intrachain disulfides connect C47–C63, C51–C65, and C56–C70. Residues G74–K79 constitute a propeptide that is removed on maturation.

Post-translationally, this is a cyclic peptide. In terms of processing, contains 3 disulfide bonds. In terms of tissue distribution, expressed in midvein, lamina and periphery of leaves (at protein level).

In terms of biological role, probably participates in a plant defense mechanism. In Petunia hybrida (Petunia), this protein is Cyclotide phyb-A.